Reading from the N-terminus, the 300-residue chain is tRNA dimethylallyltransferase (300 aa).

9–16 is a binding site for ATP; sequence GPTASGKS. Position 11–16 (11–16) interacts with substrate; it reads TASGKS. Residues 34-37 are interaction with substrate tRNA; it reads DSKQ.

It belongs to the IPP transferase family. In terms of assembly, monomer. It depends on Mg(2+) as a cofactor.

The catalysed reaction is adenosine(37) in tRNA + dimethylallyl diphosphate = N(6)-dimethylallyladenosine(37) in tRNA + diphosphate. Catalyzes the transfer of a dimethylallyl group onto the adenine at position 37 in tRNAs that read codons beginning with uridine, leading to the formation of N6-(dimethylallyl)adenosine (i(6)A). The chain is tRNA dimethylallyltransferase from Ehrlichia ruminantium (strain Welgevonden).